A 231-amino-acid chain; its full sequence is Large ribosomal subunit protein uL1 (231 aa).

Belongs to the universal ribosomal protein uL1 family. As to quaternary structure, part of the 50S ribosomal subunit.

Binds directly to 23S rRNA. The L1 stalk is quite mobile in the ribosome, and is involved in E site tRNA release. In terms of biological role, protein L1 is also a translational repressor protein, it controls the translation of the L11 operon by binding to its mRNA. The polypeptide is Large ribosomal subunit protein uL1 (Verminephrobacter eiseniae (strain EF01-2)).